We begin with the raw amino-acid sequence, 334 residues long: Glyceraldehyde-3-phosphate dehydrogenase 1 (334 aa).

Residues 11–12, D33, R77, and S119 contribute to the NAD(+) site; that span reads RI. D-glyceraldehyde 3-phosphate contacts are provided by residues 150-152 and T181; that span reads SCT. C151 (nucleophile) is an active-site residue. Residue N182 coordinates NAD(+). D-glyceraldehyde 3-phosphate is bound by residues R196, 209–210, and R232; that span reads TG. Residue N314 coordinates NAD(+).

This sequence belongs to the glyceraldehyde-3-phosphate dehydrogenase family. As to quaternary structure, homotetramer.

It is found in the cytoplasm. The catalysed reaction is D-glyceraldehyde 3-phosphate + phosphate + NAD(+) = (2R)-3-phospho-glyceroyl phosphate + NADH + H(+). It functions in the pathway carbohydrate degradation; glycolysis; pyruvate from D-glyceraldehyde 3-phosphate: step 1/5. Functionally, catalyzes the oxidative phosphorylation of glyceraldehyde 3-phosphate (G3P) to 1,3-bisphosphoglycerate (BPG) using the cofactor NAD. The first reaction step involves the formation of a hemiacetal intermediate between G3P and a cysteine residue, and this hemiacetal intermediate is then oxidized to a thioester, with concomitant reduction of NAD to NADH. The reduced NADH is then exchanged with the second NAD, and the thioester is attacked by a nucleophilic inorganic phosphate to produce BPG. This is Glyceraldehyde-3-phosphate dehydrogenase 1 (gap1) from Bacillus cereus.